Here is an 86-residue protein sequence, read N- to C-terminus: uncharacterized protein (86 aa).

The protein to M.jannaschii MJ1173.

This is an uncharacterized protein from Methanosarcina mazei (strain ATCC BAA-159 / DSM 3647 / Goe1 / Go1 / JCM 11833 / OCM 88) (Methanosarcina frisia).